A 1446-amino-acid polypeptide reads, in one-letter code: Toll-like receptor 7 (1446 aa).

A signal peptide spans 1–16 (MAAILLLLLGFSWSLA). At 17-1049 (VESALAPKES…QHGIPESYIP (1033 aa)) the chain is on the extracellular side. LRR repeat units lie at residues 133-156 (LQTL…AFEG), 158-180 (ATLK…TLEL), 188-211 (LKQL…FLCP), 213-235 (GNLQ…GFAD), 246-270 (GSEL…GISR), 271-294 (LRRL…ALAG), 295-318 (LASL…LFAG), 320-342 (KELR…LFHR), 344-368 (EQLL…TFAG), 369-392 (LIRL…TFKE), 393-416 (LYFL…AFLP), 417-440 (LYNL…LFNG), 442-464 (YVLS…VFKN), 465-488 (CSDL…LQDL), 489-511 (AMLR…SFKN), 513-535 (HQLT…MFQD), 536-559 (LPRL…SFDK), 561-582 (FELE…VFAT), 584-605 (VSLL…AFIP), 606-629 (SNLK…KLQE), 631-652 (IRVK…MSIP), 653-675 (NTIE…AFVD), and 677-699 (ANLA…QLRV). Positions 716-773 (NPFECDCTMDWLQRINNLTTRQHPRVMDMANIECVMPHARGAAVRPLSGLRPQDFLCR) constitute an LRRCT domain. 3 disulfides stabilise this stretch: C722–C772, C796–C802, and C800–C815. LRR repeat units follow at residues 828-851 (PMDS…AFIG), 852-875 (RKNL…TFAS), 876-899 (LASL…EFEQ), 900-923 (LSAL…TLAP), 925-947 (AALE…QMHA), and 951-979 (GTRL…SYVA). Residues C966 and C993 are joined by a disulfide bond. A helical transmembrane segment spans residues 1050–1070 (LLAAALALLFLLVVIAMVFAF). The Cytoplasmic portion of the chain corresponds to 1071 to 1446 (RESLRIWLFA…QGPHVQAYLV (376 aa)). Residues 1096–1233 (KLYDAVLLHS…HFWEKLRYAL (138 aa)) form the TIR domain. Disordered regions lie at residues 1301–1332 (QNYS…NHHL) and 1388–1446 (RPKR…AYLV). Positions 1395-1413 (HLQQAQAGTLGSKASQAAH) are enriched in polar residues. The segment covering 1414 to 1426 (QQQQQQQQQQQQQ) has biased composition (low complexity). Polar residues predominate over residues 1427–1439 (PNPTAVSGQQQGP).

The protein belongs to the Toll-like receptor family. As to expression, expressed in the fan-shaped body and the ellipsoid body, which are components of the locomotion center in the CNS (at protein level).

The protein resides in the cell membrane. In terms of biological role, toll-related receptor which binds to the neurotrophins NT1 and spz5. Essential for antiviral autophagy, it detects and binds to the vesicular stomatitis virus (vsv) following infection. This role is likely to be independent of the canonical Toll, immune deficiency, and JAK-STAT signaling pathways. Functions in olfactory circuit assembly by promoting synaptic partner matching between olfactory receptor neurons (ORN) axons and projection neurons (PN) dendrites partners in the antennal lobe. Function in the Va1d ORNs is necessary and sufficient for correct targeting to their partner PN dendrites. Also involved in the targeting of other classes of ORN axons. Functions with Toll-6 to regulate motor axon targeting and neuronal survival in the central nervous system (CNS). May be an upstream component of the NF-kappa-B (rel) regulatory cascade. The protein is Toll-like receptor 7 of Drosophila melanogaster (Fruit fly).